A 409-amino-acid chain; its full sequence is LL-diaminopimelate aminotransferase (409 aa).

2 residues coordinate substrate: tyrosine 15 and glycine 42. Pyridoxal 5'-phosphate-binding positions include tyrosine 72, 108–109 (AK), tyrosine 132, asparagine 186, tyrosine 217, and 245–247 (SFS). 3 residues coordinate substrate: lysine 109, tyrosine 132, and asparagine 186. Position 248 is an N6-(pyridoxal phosphate)lysine (lysine 248). Residues arginine 256 and asparagine 291 each coordinate pyridoxal 5'-phosphate. 2 residues coordinate substrate: asparagine 291 and arginine 387.

This sequence belongs to the class-I pyridoxal-phosphate-dependent aminotransferase family. LL-diaminopimelate aminotransferase subfamily. In terms of assembly, homodimer. Pyridoxal 5'-phosphate is required as a cofactor.

The catalysed reaction is (2S,6S)-2,6-diaminopimelate + 2-oxoglutarate = (S)-2,3,4,5-tetrahydrodipicolinate + L-glutamate + H2O + H(+). The protein operates within amino-acid biosynthesis; L-lysine biosynthesis via DAP pathway; LL-2,6-diaminopimelate from (S)-tetrahydrodipicolinate (aminotransferase route): step 1/1. Its function is as follows. Involved in the synthesis of meso-diaminopimelate (m-DAP or DL-DAP), required for both lysine and peptidoglycan biosynthesis. Catalyzes the direct conversion of tetrahydrodipicolinate to LL-diaminopimelate. This is LL-diaminopimelate aminotransferase from Phocaeicola vulgatus (strain ATCC 8482 / DSM 1447 / JCM 5826 / CCUG 4940 / NBRC 14291 / NCTC 11154) (Bacteroides vulgatus).